Here is a 100-residue protein sequence, read N- to C-terminus: Small ribosomal subunit protein uS14c (100 aa).

This sequence belongs to the universal ribosomal protein uS14 family. As to quaternary structure, part of the 30S ribosomal subunit.

The protein localises to the plastid. It is found in the chloroplast. Functionally, binds 16S rRNA, required for the assembly of 30S particles. The protein is Small ribosomal subunit protein uS14c of Trieres chinensis (Marine centric diatom).